The following is a 788-amino-acid chain: LPS-assembly protein LptD (788 aa).

Positions 1-24 (MKKRFPTLLATLIWTALYSQHTLA) are cleaved as a signal peptide.

Belongs to the LptD family. In terms of assembly, component of the lipopolysaccharide transport and assembly complex. Interacts with LptE and LptA.

It is found in the cell outer membrane. Functionally, together with LptE, is involved in the assembly of lipopolysaccharide (LPS) at the surface of the outer membrane. This Yersinia enterocolitica serotype O:8 / biotype 1B (strain NCTC 13174 / 8081) protein is LPS-assembly protein LptD.